The sequence spans 310 residues: MKGQQKTAETEEGTVQIQEGAVATGEDPTSVAIASIQSAATFPDPNVKYVFRTENGGQVMYRVIQVSEGQLDGQTEGTGAISGYPATQSMTQAVIQGAFTSDDAVDTEGTAAETHYTYFPSTAVGDGAGGTTSGSTAAVVTTQGSEALLGQATPPGTGQFFVMMSPQEVLQGGSQRSIAPRTHPYSPKSEAPRTTRDEKRRAQHNEVERRRRDKINNWIVQLSKIIPDCSMESTKSGQSKGGILSKACDYIQELRQSNHRLSEELQGLDQLQLDNDVLRQQVEDLKNKNLLLRAQLRHHGVEVVIKSDSN.

A compositionally biased stretch (polar residues) spans methionine 1 to isoleucine 17. Disordered stretches follow at residues methionine 1–glutamate 26 and glutamine 171–arginine 209. A compositionally biased stretch (basic and acidic residues) spans glutamate 190–arginine 209. The bHLH domain occupies lysine 199–leucine 254. A leucine-zipper region spans residues leucine 271–leucine 292. A Glycyl lysine isopeptide (Lys-Gly) (interchain with G-Cter in SUMO2) cross-link involves residue lysine 306.

As to quaternary structure, efficient DNA binding requires dimerization with another bHLH protein. Binds DNA as a homodimer or a heterodimer (USF1/USF2).

The protein resides in the nucleus. In terms of biological role, transcription factor that binds to a symmetrical DNA sequence (E-boxes) (5'-CACGTG-3') that is found in a variety of viral and cellular promoters. The chain is Upstream stimulatory factor 1 (USF1) from Bos taurus (Bovine).